The following is a 243-amino-acid chain: HTH-type transcriptional regulator MlrA (243 aa).

Residues leucine 3 to serine 72 form the HTH merR-type domain. The segment at residues isoleucine 6 to arginine 25 is a DNA-binding region (H-T-H motif).

Functionally, transcriptional activator of csgD, which is required for production of the curli (AgF). The sequence is that of HTH-type transcriptional regulator MlrA from Salmonella typhimurium (strain SL1344).